Consider the following 73-residue polypeptide: DNA-binding protein S1FA3 (73 aa).

Residues 47–52 carry the Nuclear localization signal motif; that stretch reads PPRKKK. Over residues 47–63 the composition is skewed to basic residues; that stretch reads PPRKKKPVSKKKMKKEK. The segment at 47 to 73 is disordered; it reads PPRKKKPVSKKKMKKEKMKQGVQVPGE.

It belongs to the S1FA transcription factor family.

The protein resides in the nucleus. Functionally, DNA-binding protein that specifically recognizes a negative element (S1F) within the RPS1 promoter. The protein is DNA-binding protein S1FA3 (S1FA3) of Arabidopsis thaliana (Mouse-ear cress).